A 93-amino-acid chain; its full sequence is OMEGA-ectatommitoxin(02)-Rm1c (93 aa).

The first 30 residues, 1 to 30 (MKDSYISIVIAYLMVTFILVSSMPIEGEKG), serve as a signal peptide directing secretion. Intrachain disulfides connect cysteine 39-cysteine 52, cysteine 47-cysteine 68, and cysteine 70-cysteine 79. One can recognise an EGF-like domain in the interval 43-80 (YENYCFNGKCVHVVAQDEPGKPCYSCICDEFYIGERCG).

This sequence belongs to the EGF domain peptide family. Expressed by the venom gland.

It is found in the secreted. Its function is as follows. Ant peptide with probable defensive activity which acts as a potent agonist of the mammalian epidermal growth factor receptor (EGFR). Mimics, both structurally and functionally, vertebrate epidermal growth factor (EGF) peptide hormones. In vivo, intraplantar injection in mice causes long-lasting (several days) hypersensitivity of the injected paw to both mechanical and thermal stimuli. Its long-lasting effect is unusual for venom toxins whose effects are usually immediate. One possible explanation is that it would reduce the duration of a nest attack, discourage future attacks, or enhance the actions of subsequent exposure to other pain-inducing venom peptides. This is OMEGA-ectatommitoxin(02)-Rm1c from Rhytidoponera metallica (Australian green-headed ant).